Consider the following 190-residue polypeptide: Crossover junction endodeoxyribonuclease RuvC (190 aa).

Active-site residues include aspartate 8, glutamate 67, and aspartate 139. Residues aspartate 8, glutamate 67, and aspartate 139 each contribute to the Mg(2+) site.

The protein belongs to the RuvC family. As to quaternary structure, homodimer which binds Holliday junction (HJ) DNA. The HJ becomes 2-fold symmetrical on binding to RuvC with unstacked arms; it has a different conformation from HJ DNA in complex with RuvA. In the full resolvosome a probable DNA-RuvA(4)-RuvB(12)-RuvC(2) complex forms which resolves the HJ. Mg(2+) serves as cofactor.

The protein resides in the cytoplasm. The enzyme catalyses Endonucleolytic cleavage at a junction such as a reciprocal single-stranded crossover between two homologous DNA duplexes (Holliday junction).. Functionally, the RuvA-RuvB-RuvC complex processes Holliday junction (HJ) DNA during genetic recombination and DNA repair. Endonuclease that resolves HJ intermediates. Cleaves cruciform DNA by making single-stranded nicks across the HJ at symmetrical positions within the homologous arms, yielding a 5'-phosphate and a 3'-hydroxyl group; requires a central core of homology in the junction. The consensus cleavage sequence is 5'-(A/T)TT(C/G)-3'. Cleavage occurs on the 3'-side of the TT dinucleotide at the point of strand exchange. HJ branch migration catalyzed by RuvA-RuvB allows RuvC to scan DNA until it finds its consensus sequence, where it cleaves and resolves the cruciform DNA. This Haemophilus influenzae (strain PittGG) protein is Crossover junction endodeoxyribonuclease RuvC.